Here is a 288-residue protein sequence, read N- to C-terminus: Release factor glutamine methyltransferase (288 aa).

S-adenosyl-L-methionine is bound by residues 123–127 (GTGSG), aspartate 146, and asparagine 190. 190–193 (NPPY) serves as a coordination point for substrate.

Belongs to the protein N5-glutamine methyltransferase family. PrmC subfamily.

The enzyme catalyses L-glutaminyl-[peptide chain release factor] + S-adenosyl-L-methionine = N(5)-methyl-L-glutaminyl-[peptide chain release factor] + S-adenosyl-L-homocysteine + H(+). Functionally, methylates the class 1 translation termination release factors RF1/PrfA and RF2/PrfB on the glutamine residue of the universally conserved GGQ motif. This Bacillus subtilis (strain 168) protein is Release factor glutamine methyltransferase.